Reading from the N-terminus, the 1259-residue chain is MPRRRRRRRAAPGGQVPPELRLAYGARALTLGRAVFSLLPSPRHCESPCPACRGRVASGCLACRRWEHLLRDGDPVAYRRLITRAVCAIAADDLSAPPPPRYTPGNSGHSQARLVREMMKSIVADQSHGTKNVLCNGLHEGGQSICISDLVSSSSWSILLHRIGDLLMCYLLRCTSIFLPVKKNDYFQVSGVPLNVVLRNPIFASTVARKHQPQTTKAKCHTCYLWKSANMAENLSICHDSSNSGVNSSFSSTCKIVTQQSCETCGSIRRAESKDPSEGCNCPKFPSDGRSGECCNCYTHNTRKRKRLYSWQRRSKKKQVCSVDESSAEWSKLNGSNFNMSNGPSENLAGKMNDQAQSVELTVDNTSLARSNDDSSSEIKVINATILSSEKSPCSVFDIRGSQGLSCHYSLSEVQYQSTCPQVGPSSYLHLNSCSICFNCIISNASKHLSLDSLISRNGIFYNRRTTYSVFHCKHILSKRKRPDALSLVKHIFGINSCCASLLKYNCHESTIRKSNCLCCWLPKSIKNLIRNSKRCQYKKLFLKHCSVKCKVAPDVTKNDGKAHYPPGGKAAYYDRSFSRLEAYSTHQQVASFVWAVLKRIVPKPLLGNSFGKRSLRTNIWKFIKLRRFETFQLSDCIGDLKVSHYSWLSNIEFSNCFCSAIIGKQTGSSTSAEEQKQKNILHCWISWLFSDIVIPVVRTYFYVTERESKRYDVFYYPKSVWRDLTSNAIASLNKKNFRILRGEPRKAVRHLNCSSRVRFLPKAKDMRPLVDLRAKSKDANLNKCHLIMKKLRDEKPEMFGSSVFDYNNVHQNLSQFISSKRSQLMKKLKVYIVVADVSKAFDCVSHDMVLKMIDDAFKCDEYTVRKCSKVICNRSKNSLYRFDSNASIGNGNSIYDLSIQLSSGGGIFVDQGTICRILKEQFHHLLYEQIKCNILKIGQKYYLQQVGIAQGSKLSPNLCSLYYGHLENSVLSKFLHDSKLNAGEAFSEPEYLLMRFIDDFIFISFSLEHAQKFLNRMRRGFVFYNCYMNDSKYGFNFCAGNSEPSSNRLYRGDDGVSFMPWSGLLINCETLEIQADYTRYLDITIISTITVKMHSSTKYIHSKLCHYMRPKCHPIFYDSNINSPGTIRVNIYQAFLLCAMKFHCYIRSVSDANVSKLELLQVIKRTFRYMHSLIVRRMQDVELHYNVRPVLKLRRKETIWLGLTAYIRVLQQKQSRYKDMLTLLTAELGRYCHLGHECDTLRYAVDDSHSSMFWKFKF.

In terms of domain architecture, Reverse transcriptase spans 742–1067 (RGEPRKAVRH…SFMPWSGLLI (326 aa)). Residues Asp837, Asp999, and Asp1000 each coordinate Mg(2+).

The protein belongs to the reverse transcriptase family. Telomerase subfamily. Component of the telomerase ribonucleoprotein complex. As to expression, expressed in shoot apices and immature embryos.

The protein resides in the nucleus. It localises to the chromosome. The protein localises to the telomere. The catalysed reaction is DNA(n) + a 2'-deoxyribonucleoside 5'-triphosphate = DNA(n+1) + diphosphate. Its function is as follows. Telomerase is a ribonucleoprotein enzyme essential for the replication of chromosome termini in most eukaryotes. It elongates telomeres. It is a reverse transcriptase that adds simple sequence repeats to chromosome ends by copying a template sequence within the RNA component of the enzyme. This is Telomerase reverse transcriptase (TERT) from Oryza sativa subsp. japonica (Rice).